The chain runs to 76 residues: Acyl carrier protein (76 aa).

In terms of domain architecture, Carrier spans 1–76; the sequence is MSIEERVKKI…SAIDYVQNNQ (76 aa). O-(pantetheine 4'-phosphoryl)serine is present on serine 36.

The protein belongs to the acyl carrier protein (ACP) family. Post-translationally, 4'-phosphopantetheine is transferred from CoA to a specific serine of apo-ACP by AcpS. This modification is essential for activity because fatty acids are bound in thioester linkage to the sulfhydryl of the prosthetic group.

The protein localises to the cytoplasm. It participates in lipid metabolism; fatty acid biosynthesis. Its function is as follows. Carrier of the growing fatty acid chain in fatty acid biosynthesis. The sequence is that of Acyl carrier protein from Haemophilus influenzae (strain 86-028NP).